A 1678-amino-acid polypeptide reads, in one-letter code: Nuclear pore complex protein Nup98-Nup96 (1678 aa).

A compositionally biased stretch (low complexity) spans 1–11 (MFGQNKSFGSS). 5 disordered regions span residues 1 to 41 (MFGQ…QPAN), 68 to 100 (SSIF…FGST), 301 to 366 (TTGS…GAPA), 441 to 473 (FGNT…TQAT), and 603 to 631 (SKEA…RSVH). Residues 12–22 (SFGGGSSGSGL) are compositionally biased toward gly residues. Low complexity-rich tracts occupy residues 23–38 (FGQN…LFGQ) and 73–83 (SPQQPQNNQSS). Positions 306–329 (LFGNQQPQTNTGGSLFGNTQNQNQ) are enriched in polar residues. Low complexity predominate over residues 345-366 (FGQAQQQPQQQSSGFSFGGAPA). Composition is skewed to polar residues over residues 456 to 473 (SQPQ…TQAT) and 615 to 628 (RNST…LTNR). The region spanning 777–919 (KPDYFSLPTI…GSWVFRVDHF (143 aa)) is the Peptidase S59 domain. Serine 920 serves as the catalytic Nucleophile.

It belongs to the nucleoporin GLFG family. In terms of assembly, part of the NPC. The Nup98 and Nup96 chains are autoproteolytically processed from a single precursor protein.

The protein localises to the cytoplasmic granule. Its subcellular location is the nucleus membrane. The protein resides in the nucleus. It is found in the nuclear pore complex. It localises to the nucleus envelope. The protein localises to the chromosome. Its function is as follows. Nup98 and Nup96 play a role in the bidirectional transport across the nucleoporin complex (NPC). Required for the nuclear import of hcp-4 during mitotic prophase, this step is essential for centrosome assembly and resolution. Regulates nucleoporin npp-5 localization to the nuclear membrane during interphase and to kinetochores during metaphase. Has a role in P granule integrity; may promote the 'liquid phase' of P granules by increasing the number of interacting RNA-protein complexes. Binds nos-2 mRNA, probably indirectly, and promotes its accumulation in P granules. The polypeptide is Nuclear pore complex protein Nup98-Nup96 (Caenorhabditis elegans).